We begin with the raw amino-acid sequence, 161 residues long: Ribosomal RNA large subunit methyltransferase H (161 aa).

Residues L78, G110, and 129 to 134 (LGRMTF) contribute to the S-adenosyl-L-methionine site.

Belongs to the RNA methyltransferase RlmH family. In terms of assembly, homodimer.

The protein resides in the cytoplasm. The enzyme catalyses pseudouridine(1915) in 23S rRNA + S-adenosyl-L-methionine = N(3)-methylpseudouridine(1915) in 23S rRNA + S-adenosyl-L-homocysteine + H(+). Its function is as follows. Specifically methylates the pseudouridine at position 1915 (m3Psi1915) in 23S rRNA. This is Ribosomal RNA large subunit methyltransferase H from Symbiobacterium thermophilum (strain DSM 24528 / JCM 14929 / IAM 14863 / T).